The primary structure comprises 219 residues: Charged multivesicular body protein 5 (219 aa).

Residues 1–10 are compositionally biased toward basic residues; that stretch reads MNRFFGKAKP. Residues 1-21 form a disordered region; that stretch reads MNRFFGKAKPKAPPPSLTDCI. A coiled-coil region spans residues 26 to 179; it reads SRAESIDKKI…LGDELLADED (154 aa). Phosphoserine is present on serine 86. A disordered region spans residues 188–219; that stretch reads SAPAIPEGVPTDTKNKDGVLVDEFGLPQIPAS.

Belongs to the SNF7 family. In terms of assembly, probable peripherally associated component of the endosomal sorting required for transport complex III (ESCRT-III). ESCRT-III components are thought to multimerize to form a flat lattice on the perimeter membrane of the endosome. Several assembly forms of ESCRT-III may exist that interact and act sequentially. Interacts with VTA1. Interacts with CHMP2A. Interacts with VTA1; the interaction involves soluble CHMP5. Interacts with NOD2. Interacts with BROX. ISGylated. Isgylation inhibits its interaction with VTA1.

The protein localises to the cytoplasm. The protein resides in the cytosol. It localises to the endosome membrane. It is found in the midbody. In terms of biological role, probable peripherally associated component of the endosomal sorting required for transport complex III (ESCRT-III) which is involved in multivesicular bodies (MVBs) formation and sorting of endosomal cargo proteins into MVBs. MVBs contain intraluminal vesicles (ILVs) that are generated by invagination and scission from the limiting membrane of the endosome and mostly are delivered to lysosomes enabling degradation of membrane proteins, such as stimulated growth factor receptors, lysosomal enzymes and lipids. The MVB pathway appears to require the sequential function of ESCRT-O, -I,-II and -III complexes. ESCRT-III proteins mostly dissociate from the invaginating membrane before the ILV is released. The ESCRT machinery also functions in topologically equivalent membrane fission events, such as the terminal stages of cytokinesis. ESCRT-III proteins are believed to mediate the necessary vesicle extrusion and/or membrane fission activities, possibly in conjunction with the AAA ATPase VPS4. In Mus musculus (Mouse), this protein is Charged multivesicular body protein 5 (Chmp5).